A 99-amino-acid chain; its full sequence is NADH-ubiquinone oxidoreductase chain 4L (99 aa).

3 consecutive transmembrane segments (helical) span residues 5 to 25, 30 to 50, and 65 to 85; these read IITA…GFII, ILLL…IIIC, and LYIL…LVLF.

The protein belongs to the complex I subunit 4L family.

The protein localises to the mitochondrion membrane. It carries out the reaction a ubiquinone + NADH + 5 H(+)(in) = a ubiquinol + NAD(+) + 4 H(+)(out). In terms of biological role, core subunit of the mitochondrial membrane respiratory chain NADH dehydrogenase (Complex I) that is believed to belong to the minimal assembly required for catalysis. Complex I functions in the transfer of electrons from NADH to the respiratory chain. The immediate electron acceptor for the enzyme is believed to be ubiquinone. This chain is NADH-ubiquinone oxidoreductase chain 4L (ND4L), found in Allomyces macrogynus.